The sequence spans 290 residues: Eukaryotic translation initiation factor 3 subunit G (290 aa).

The segment covering M1–A12 has biased composition (basic and acidic residues). 2 disordered regions span residues M1–A30 and A173–A192. The RRM domain maps to P204–P285.

The protein belongs to the eIF-3 subunit G family. Component of the eukaryotic translation initiation factor 3 (eIF-3) complex.

The protein localises to the cytoplasm. In terms of biological role, RNA-binding component of the eukaryotic translation initiation factor 3 (eIF-3) complex, which is involved in protein synthesis of a specialized repertoire of mRNAs and, together with other initiation factors, stimulates binding of mRNA and methionyl-tRNAi to the 40S ribosome. The eIF-3 complex specifically targets and initiates translation of a subset of mRNAs involved in cell proliferation. This subunit can bind 18S rRNA. This is Eukaryotic translation initiation factor 3 subunit G from Cryptococcus neoformans var. neoformans serotype D (strain B-3501A) (Filobasidiella neoformans).